The chain runs to 28 residues: Peptide 2 (28 aa).

It belongs to the short scorpion toxin superfamily. Potassium channel inhibitor family. Alpha-KTx 09 subfamily. As to expression, expressed by the venom gland.

It localises to the secreted. Blocks potassium channels. The polypeptide is Peptide 2 (Hottentotta tamulus sindicus (Scorpion)).